We begin with the raw amino-acid sequence, 414 residues long: MFSSESVTEGHPDKICDQISDAIVDALLTADPLSRVAAEVVVNTGMVILTGEITSQAHVNFTRLVRDKVAEIGYTDAKNGFSAESCAVLVAFDEQSPDIAQGVNLALESRTSQEDEFDLIGAGDQGLMFGFACDETPELMPLPISLAHRLSRQLAAVRKNGTLPYLRPDGKTQVTVAYEEGRPVGIHTLLISTQHTPTIGAITEEAAVQERIRADLWEAVVQPVFAELPIKPDGNTRFLTNPTGKFVIGGPQGDAGLTGRKIIVDTYGGYSRHGGGAFSGKDPTKVDRSAAYAARYVAKNIVAAGLAQKCEVQVSYAIGVARPINLLVETFGTGRIPDEALLRLVQRHFDLRPAAILAQFQLRELPRQRGGRFYQNVAVYGHFGQTHLDLPWERTDKAALLREEAFAGATAILG.

Residue histidine 11 coordinates ATP. Residue aspartate 13 participates in Mg(2+) binding. Glutamate 39 lines the K(+) pocket. Residues glutamate 52 and glutamine 95 each coordinate L-methionine. The segment at 95–105 (QSPDIAQGVNL) is flexible loop. Residues 169–171 (DGK), 245–246 (KF), aspartate 254, 260–261 (RK), alanine 277, and lysine 281 contribute to the ATP site. Position 254 (aspartate 254) interacts with L-methionine. Lysine 285 is a binding site for L-methionine.

Belongs to the AdoMet synthase family. Homotetramer; dimer of dimers. Requires Mg(2+) as cofactor. The cofactor is K(+).

It localises to the cytoplasm. It carries out the reaction L-methionine + ATP + H2O = S-adenosyl-L-methionine + phosphate + diphosphate. It participates in amino-acid biosynthesis; S-adenosyl-L-methionine biosynthesis; S-adenosyl-L-methionine from L-methionine: step 1/1. Catalyzes the formation of S-adenosylmethionine (AdoMet) from methionine and ATP. The overall synthetic reaction is composed of two sequential steps, AdoMet formation and the subsequent tripolyphosphate hydrolysis which occurs prior to release of AdoMet from the enzyme. The sequence is that of S-adenosylmethionine synthase from Synechococcus sp. (strain JA-3-3Ab) (Cyanobacteria bacterium Yellowstone A-Prime).